We begin with the raw amino-acid sequence, 538 residues long: Probable bifunctional tRNA threonylcarbamoyladenosine biosynthesis protein (538 aa).

The interval 1–327 (MIVLICLGIE…FRTDEVEAPW (327 aa)) is kae1. H111, H115, and Y132 together coordinate Fe cation. L-threonylcarbamoyladenylate is bound by residues 132-136 (YVSGG), D164, G177, E181, and N260. D288 serves as a coordination point for Fe cation. Residues 336–538 (KLPDNLIAKG…EIESRGRYTH (203 aa)) enclose the Protein kinase domain. Residues 342 to 350 (IAKGAESDI) and K363 each bind ATP. Residue D452 is the Proton acceptor; for kinase activity of the active site.

It in the N-terminal section; belongs to the KAE1 / TsaD family. This sequence in the C-terminal section; belongs to the protein kinase superfamily. Tyr protein kinase family. BUD32 subfamily. As to quaternary structure, component of the KEOPS complex that consists of Kae1, Bud32, Cgi121 and Pcc1; the whole complex dimerizes. It depends on Fe(2+) as a cofactor.

Its subcellular location is the cytoplasm. The catalysed reaction is L-seryl-[protein] + ATP = O-phospho-L-seryl-[protein] + ADP + H(+). It carries out the reaction L-threonyl-[protein] + ATP = O-phospho-L-threonyl-[protein] + ADP + H(+). The enzyme catalyses L-threonylcarbamoyladenylate + adenosine(37) in tRNA = N(6)-L-threonylcarbamoyladenosine(37) in tRNA + AMP + H(+). Required for the formation of a threonylcarbamoyl group on adenosine at position 37 (t(6)A37) in tRNAs that read codons beginning with adenine. Is a component of the KEOPS complex that is probably involved in the transfer of the threonylcarbamoyl moiety of threonylcarbamoyl-AMP (TC-AMP) to the N6 group of A37. The Kae1 domain likely plays a direct catalytic role in this reaction. The Bud32 domain probably displays kinase activity that regulates Kae1 function. The chain is Probable bifunctional tRNA threonylcarbamoyladenosine biosynthesis protein from Methanobrevibacter smithii (strain ATCC 35061 / DSM 861 / OCM 144 / PS).